Reading from the N-terminus, the 228-residue chain is 2,3-bisphosphoglycerate-dependent phosphoglycerate mutase (228 aa).

Substrate contacts are provided by residues 8–15, 21–22, Arg-60, 87–90, Lys-98, 114–115, and 183–184; these read RHGQSEWN, TG, ERHY, RR, and GN. Catalysis depends on His-9, which acts as the Tele-phosphohistidine intermediate. The active-site Proton donor/acceptor is the Glu-87.

It belongs to the phosphoglycerate mutase family. BPG-dependent PGAM subfamily.

The enzyme catalyses (2R)-2-phosphoglycerate = (2R)-3-phosphoglycerate. It participates in carbohydrate degradation; glycolysis; pyruvate from D-glyceraldehyde 3-phosphate: step 3/5. Catalyzes the interconversion of 2-phosphoglycerate and 3-phosphoglycerate. The polypeptide is 2,3-bisphosphoglycerate-dependent phosphoglycerate mutase (Staphylococcus epidermidis (strain ATCC 35984 / DSM 28319 / BCRC 17069 / CCUG 31568 / BM 3577 / RP62A)).